The following is a 348-amino-acid chain: D-erythrose-4-phosphate dehydrogenase (348 aa).

Position 12–13 (12–13 (RI)) interacts with NAD(+). Residues 154–156 (SCT), arginine 200, 213–214 (TR), and arginine 236 contribute to the substrate site. The active-site Nucleophile is the cysteine 155. Asparagine 318 serves as a coordination point for NAD(+).

The protein belongs to the glyceraldehyde-3-phosphate dehydrogenase family. Epd subfamily. In terms of assembly, homotetramer.

It is found in the cytoplasm. The catalysed reaction is D-erythrose 4-phosphate + NAD(+) + H2O = 4-phospho-D-erythronate + NADH + 2 H(+). Its pathway is cofactor biosynthesis; pyridoxine 5'-phosphate biosynthesis; pyridoxine 5'-phosphate from D-erythrose 4-phosphate: step 1/5. Functionally, catalyzes the NAD-dependent conversion of D-erythrose 4-phosphate to 4-phosphoerythronate. The polypeptide is D-erythrose-4-phosphate dehydrogenase (Erwinia tasmaniensis (strain DSM 17950 / CFBP 7177 / CIP 109463 / NCPPB 4357 / Et1/99)).